Here is a 205-residue protein sequence, read N- to C-terminus: MTKLSKRQLDILRFIKAEVKSKGYPPSVREIGEAVGLASSSTVHGHLARLETKGLIRRDPTKPRAIEILDEEVDIPQSQVVNVPVIGKVTAGSPITAVENIEEYFPLPDRMVPPDEHVFMLEIMGDSMIDAGILDKDYVIVKQQNTANNGEIVVAMTEDDEATVKRFYKEDTHIRLQPENPTMEPIILQNVSILGKVIGVFRTVH.

Positions 28 to 48 form a DNA-binding region, H-T-H motif; it reads VREIGEAVGLASSSTVHGHLA. Catalysis depends on for autocatalytic cleavage activity residues Ser-127 and Lys-165.

The protein belongs to the peptidase S24 family. As to quaternary structure, homodimer. Post-translationally, following treatment with mitomycin C protein levels begin to decrease after a 5-min lag and do not return to their original levels for at least 90 minutes.

It catalyses the reaction Hydrolysis of Ala-|-Gly bond in repressor LexA.. Its function is as follows. Represses dinA, dinB, dinC, recA genes and itself by binding to the 14 bp palindromic sequence 5'-CGAACNNNNGTTCG-3'; some genes have a tandem consensus sequence and their binding is cooperative. In the presence of single-stranded DNA, RecA interacts with LexA causing an autocatalytic cleavage which disrupts the DNA-binding part of LexA, leading to derepression of the SOS regulon and eventually DNA repair; autocleavage is maximal at pH 11 in the absence of RecA and ssDNA. This chain is LexA repressor, found in Bacillus subtilis (strain 168).